Consider the following 388-residue polypeptide: tRNA (guanine(26)-N(2))-dimethyltransferase (388 aa).

Residues 4 to 383 enclose the Trm1 methyltransferase domain; sequence RTIVEGTTKI…APIAEIKKII (380 aa). Residues arginine 41, arginine 78, aspartate 94, and alanine 123 each contribute to the S-adenosyl-L-methionine site. Positions 251, 254, 271, and 274 each coordinate Zn(2+).

Belongs to the class I-like SAM-binding methyltransferase superfamily. Trm1 family.

The catalysed reaction is guanosine(26) in tRNA + 2 S-adenosyl-L-methionine = N(2)-dimethylguanosine(26) in tRNA + 2 S-adenosyl-L-homocysteine + 2 H(+). Its function is as follows. Dimethylates a single guanine residue at position 26 of a number of tRNAs using S-adenosyl-L-methionine as donor of the methyl groups. The chain is tRNA (guanine(26)-N(2))-dimethyltransferase from Methanosarcina acetivorans (strain ATCC 35395 / DSM 2834 / JCM 12185 / C2A).